We begin with the raw amino-acid sequence, 199 residues long: Recombination protein RecR (199 aa).

The C4-type zinc-finger motif lies at 58-73; the sequence is CLVCGNVTGSDICPIC. The region spanning 81-176 is the Toprim domain; that stretch reads GEICVVTDVA…AVTGLAQGVP (96 aa).

Belongs to the RecR family.

Functionally, may play a role in DNA repair. It seems to be involved in an RecBC-independent recombinational process of DNA repair. It may act with RecF and RecO. The sequence is that of Recombination protein RecR from Paracoccus denitrificans (strain Pd 1222).